A 249-amino-acid chain; its full sequence is Molybdate/tungstate transport system permease protein WtpB (249 aa).

Residues 1–10 are Cytoplasmic-facing; sequence MDRRDYLAYA. Residues 11–31 traverse the membrane as a helical segment; that stretch reads FAGLGAFLVAFIGLPLFMIFI. The Extracellular segment spans residues 32–56; that stretch reads KQAYDLEALQRTLVDPLVIESIRNS. In terms of domain architecture, ABC transmembrane type-1 spans 53-239; that stretch reads IRNSLFTATV…TISLAVFIFL (187 aa). A helical transmembrane segment spans residues 57–77; that stretch reads LFTATVSTLLGILFGVPLGYV. At 78-96 the chain is on the cytoplasmic side; the sequence is LARKEFKGKNFVQALIDTP. A helical transmembrane segment spans residues 97-117; that stretch reads IVIPHSVVGIMLLVTFSDAIL. Asp118 is a topological domain (extracellular). Residues 119–139 form a helical membrane-spanning segment; sequence NYKGIVAVMLFVSSPFIVNSA. Residues 140–179 are Cytoplasmic-facing; it reads RDGFLSVDEKLEYVARTLGASGLRTFFSVTLPNAIHSIAS. A helical membrane pass occupies residues 180–200; that stretch reads GAIMAWARAISEVGAILIVAY. At 201 to 223 the chain is on the extracellular side; that stretch reads YPKTAQVLIMEYFNNYGLRASRP. A helical membrane pass occupies residues 224 to 244; it reads IAVILVTISLAVFIFLRWLVG. The Cytoplasmic segment spans residues 245–249; it reads RGRNA.

Belongs to the binding-protein-dependent transport system permease family. The complex is composed of two ATP-binding proteins (WtpC), two transmembrane proteins (WtpB) and a solute-binding protein (WtpA).

It localises to the cell membrane. In terms of biological role, part of the ABC transporter complex WtpABC involved in molybdate/tungstate import. Probably responsible for the translocation of the substrate across the membrane. The sequence is that of Molybdate/tungstate transport system permease protein WtpB from Pyrococcus furiosus (strain ATCC 43587 / DSM 3638 / JCM 8422 / Vc1).